A 102-amino-acid chain; its full sequence is MQKARIKLASTNIKALNEVTDQIKQIAERTGVRMSGPIPLPTKRIRITTRKSPDGEGTATFDRFELRVHKRLVDIEADERAMRQIMRIRVPEDVTIEIELIS.

It belongs to the universal ribosomal protein uS10 family. As to quaternary structure, part of the 30S ribosomal subunit.

In terms of biological role, involved in the binding of tRNA to the ribosomes. In Thermococcus gammatolerans (strain DSM 15229 / JCM 11827 / EJ3), this protein is Small ribosomal subunit protein uS10.